The sequence spans 332 residues: Leucine carboxyl methyltransferase 1 homolog (332 aa).

Residues lysine 22, arginine 57, glycine 83, aspartate 107, 153–154 (DL), and glutamate 180 contribute to the S-adenosyl-L-methionine site.

It belongs to the methyltransferase superfamily. LCMT family.

The protein resides in the cytoplasm. It is found in the membrane. The enzyme catalyses [phosphatase 2A protein]-C-terminal L-leucine + S-adenosyl-L-methionine = [phosphatase 2A protein]-C-terminal L-leucine methyl ester + S-adenosyl-L-homocysteine. Functionally, methylates the carboxyl group of the C-terminal leucine residue of protein phosphatase 2A (PP2A) catalytic subunits to form alpha-leucine ester residues. Involved in brassinosteroid (BR) signaling. Plays a negative role in BR signaling pathway. Functions as a positive regulator of BRI1 receptor-kinase degradation. Methylates PP2A, thus facilitating its association with activated BRI1. This leads to receptor dephosphorylation and degradation, and thus to the termination of BR signaling. May act upstream of ASK7/BIN2. Involved in methylation of PP2A during environmental stress responses. In Arabidopsis thaliana (Mouse-ear cress), this protein is Leucine carboxyl methyltransferase 1 homolog.